A 204-amino-acid polypeptide reads, in one-letter code: Guanine-specific ADP-ribosyl transferase (204 aa).

Positions M1 to A42 are cleaved as a signal peptide. C46 and C76 are oxidised to a cystine. Residues R81–R85 and K98 each bind NADH. GDP-binding positions include V111–N114, W132–K134, W159, and Q162. The short motif at W132–G136 is the PN (phosphate-nicotinamide) loop element. Cysteines 180 and 194 form a disulfide.

It belongs to the pierisin ADP-ribosyltransferase family. Monomer.

It localises to the secreted. The enzyme catalyses guanosine + NAD(+) = N(2)-(ADP-D-ribosyl)-guanosine + nicotinamide + H(+). It carries out the reaction a 2'-deoxyguanosine in DNA + NAD(+) = an N(2)-(ADP-L-ribosyl)-2'-deoxyguanosine in DNA + nicotinamide + H(+). It catalyses the reaction 2'-deoxyguanosine + NAD(+) = N(2)-(ADP-D-ribosyl)-2'-deoxyguanosine + nicotinamide + H(+). The catalysed reaction is GMP + NAD(+) = N(2)-(ADP-D-ribosyl)-GMP + nicotinamide + H(+). The enzyme catalyses GTP + NAD(+) = N(2)-(ADP-D-ribosyl)-GTP + nicotinamide + H(+). It carries out the reaction dGMP + NAD(+) = N(2)-(ADP-D-ribosyl)-dGMP + nicotinamide + H(+). It catalyses the reaction dGTP + NAD(+) = N(2)-(ADP-D-ribosyl)-dGTP + nicotinamide + H(+). The catalysed reaction is 3',5'-cyclic GMP + NAD(+) = N(2)-(ADP-D-ribosyl)-3',5'-cyclic GMP + nicotinamide + H(+). The enzyme catalyses guanine + NAD(+) = N(2)-(ADP-D-ribosyl)-guanine + nicotinamide + H(+). It carries out the reaction GDP + NAD(+) = N(2)-(ADP-D-ribosyl)-GDP + nicotinamide + H(+). Inhibited by NADH. Functionally, ADP-ribosylates the N2 amino group of guanosine, deoxyguanosine, GMP, dGMP, cGMP, GTP and dGTP; oligo-guanosine, oligo-deoxyguanosine and tRNA are ADP-ribosylated less efficiently, while dsDNA is a very poor substrate. Also acts on GDP. This is Guanine-specific ADP-ribosyl transferase from Streptomyces coelicolor (strain ATCC BAA-471 / A3(2) / M145).